A 378-amino-acid chain; its full sequence is UPF0754 membrane protein Exig_0680 (378 aa).

2 helical membrane-spanning segments follow: residues 5 to 25 (VDLV…GAVT) and 357 to 377 (ITWL…ILLI).

Belongs to the UPF0754 family.

The protein resides in the cell membrane. The chain is UPF0754 membrane protein Exig_0680 from Exiguobacterium sibiricum (strain DSM 17290 / CCUG 55495 / CIP 109462 / JCM 13490 / 255-15).